We begin with the raw amino-acid sequence, 29 residues long: Cytochrome b6-f complex subunit 8 (29 aa).

Residues Ile-3–Val-23 form a helical membrane-spanning segment.

It belongs to the PetN family. The 4 large subunits of the cytochrome b6-f complex are cytochrome b6, subunit IV (17 kDa polypeptide, PetD), cytochrome f and the Rieske protein, while the 4 small subunits are PetG, PetL, PetM and PetN. The complex functions as a dimer.

It localises to the cellular thylakoid membrane. In terms of biological role, component of the cytochrome b6-f complex, which mediates electron transfer between photosystem II (PSII) and photosystem I (PSI), cyclic electron flow around PSI, and state transitions. The chain is Cytochrome b6-f complex subunit 8 from Nostoc punctiforme (strain ATCC 29133 / PCC 73102).